Here is a 608-residue protein sequence, read N- to C-terminus: N(6)-adenosine-methyltransferase MT-A70-like protein (608 aa).

Residues K250–V265 are compositionally biased toward basic and acidic residues. The disordered stretch occupies residues K250 to T272. S-adenosyl-L-methionine is bound by residues D395–L396 and D413. Residues P414 to S428 form a gate loop 1 region. An interphase loop region spans residues Q480–G497. Positions R483–H496 are positively charged region required for RNA-binding. The interval V525–D533 is gate loop 2. S-adenosyl-L-methionine is bound by residues K531, R554–N557, and N567–Q568.

Belongs to the MT-A70-like family. As to quaternary structure, component of the WMM complex, a N6-methyltransferase complex composed of a catalytic subcomplex, named MAC, and of an associated subcomplex, named MACOM. The MAC subcomplex is composed of Ime4/Mettl3 and Mettl14. The MACOM subcomplex is composed of fl(2)d, Flacc/Xio, Hakai, vir, and, in some cases of nito. As to expression, expressed in testes. In the ovaries, detected in germaria, prefollicle, follicle and polar cells (at protein levels). Detected in the ooplasm and in the cells of the 16-cell cyst of early stages (at protein levels).

It localises to the nucleus. The enzyme catalyses an adenosine in mRNA + S-adenosyl-L-methionine = an N(6)-methyladenosine in mRNA + S-adenosyl-L-homocysteine + H(+). Catalytic component of the WMM complex, a complex that mediates N6-methyladenosine (m6A) methylation of mRNAs, a modification that plays a role in the efficiency of mRNA splicing and is required for sex determination. In the heterodimer formed with Mettl14, constitutes the catalytic core. Required for sex determination and dosage compensation via Sxl alternative splicing: m6A methylation acts as a key regulator of Sxl pre-mRNA and promotes female-specific alternative splicing of Sxl, which determines female physiognomy. M6A methylation is also required for neuronal functions. During oogenesis, required for egg chamber development probably as part of the N/Notch signaling. The sequence is that of N(6)-adenosine-methyltransferase MT-A70-like protein from Drosophila melanogaster (Fruit fly).